A 353-amino-acid polypeptide reads, in one-letter code: Guanine nucleotide-binding protein subunit alpha (353 aa).

Residues M1–D26 form a disordered region. A lipid anchor (N-myristoyl glycine) is attached at G2. The S-palmitoyl cysteine moiety is linked to residue C3. The segment covering V7–D26 has biased composition (basic and acidic residues). The G-alpha domain maps to N32–I353. The segment at K35–T48 is G1 motif. GTP-binding residues include E43, S44, G45, K46, S47, T48, D150, L175, T181, G203, N269, K270, D272, and A325. Mg(2+) is bound at residue S47. The segment at D173 to T181 is G2 motif. A Mg(2+)-binding site is contributed by T181. The tract at residues Y196–R205 is G3 motif. The segment at I265–D272 is G4 motif. A G5 motif region spans residues T323 to T328.

The protein belongs to the G-alpha family. G(q) subfamily. As to quaternary structure, g proteins are composed of 3 units; alpha, beta and gamma. The alpha chain contains the guanine nucleotide binding site. It depends on Mg(2+) as a cofactor.

Guanine nucleotide-binding proteins (G proteins) are involved as modulators or transducers in various transmembrane signaling systems. This Sporothrix schenckii (strain ATCC 58251 / de Perez 2211183) (Rose-picker's disease fungus) protein is Guanine nucleotide-binding protein subunit alpha (SSG-1).